The sequence spans 1020 residues: MFRRSKNNSYDTSQTKQRFSIKKFKFGAASVLIGLSFLGGVTQGNLNIFEESIVAASTIPGSAATLNTSITKNIQNGNAYIDLYDVKLGKIDPLQLIVLEQGFTAKYVFRQGTKYYGDVSQLQSTGRASLTYNIFGEDGLPHVKTDGQIDIVSVALTIYDSTTLRDKIEEVRTNANDPKWTEESRTEVLTGLDTIKTDIDNNPKTQTDIDSKIVEVNELEKLLVLSVPDKDKYDPTGGETTVPQGTPVSDKEITDLVKIPDGSKGVPTVVGDRPDTNVPGDHKVTVEVTYPDGTKDTVEVTVHVTPKPVPDKDKYDPTGGETTVPQGTPVSDKEITDLVKIPDGSKGVPTVVGDRPDTNVPGDHKVTVEVTYPDGTKDTVEVTVHVTPKPVPDKDKYDPTGGETTVPQGTPVSDKEITDLVKIPDGSKGVPTVVGDRPDTNVPGDHKVTVEVTYPDGTKDTVEVTVHVTPKPVPDKDKYDPTGGETTVPQGTPVSDKEITDLVKIPDGSKGVPTVVGDRPDTNVPGDHKVTVEVTYPDGTKDTVEVTVHVTPKPVPDKDKYDPTGGETTVPQGTPVSDKEITDLVKIPDGSKGVPTVVGDRPDTNVPGDHKVTVEVTYPDGTKDTVEVTVHVTPKPVPDKDKYDPTGGETTVPQGTPVSDKEITDLVKIPDGSKGVPTVVGDRPDTNVPGDHKVTVEVTYPDGTKDTVEVTVHVTPKPVPDKDKYDPTGGETTVPQGTPVSDKEITDLVKIPDGSKGVPTVVGDRPDTNVPGDHKVTVEVTYPDGTKDTVEVTVHVTPKPVPDKDKYDPTGGETTVPQGTPVSDKEITDLVKIPDGSKGVPTVVGDRPDTNVPGDHKVTVEVTYPDGTKDTVEVTVHVTPKPVPDKDKYDPTGGETTVPQGTPVSDKEITDLVKIPDGSKGVPTVVGDRPDTNVPGDHKVTVEVTYPDGTKDTVEVTVHVTPKPVPDKDKYDPTGKAQQVNGKGNKLPATGENATPFFNVAALTIISSVGLLSVSKKKED.

An N-terminal signal peptide occupies residues 1–41 (MFRRSKNNSYDTSQTKQRFSIKKFKFGAASVLIGLSFLGGV). The 9 X 82 AA tandem repeats stretch occupies residues 227–964 (VPDKDKYDPT…EVTVHVTPKP (738 aa)). Disordered regions lie at residues 261 to 281 (DGSKGVPTVVGDRPDTNVPGD), 306 to 330 (PKPVPDKDKYDPTGGETTVPQGTPV), 342 to 363 (PDGSKGVPTVVGDRPDTNVPGD), 388 to 445 (PKPV…VPGD), 470 to 494 (PKPVPDKDKYDPTGGETTVPQGTPV), 506 to 527 (PDGSKGVPTVVGDRPDTNVPGD), 552 to 576 (PKPVPDKDKYDPTGGETTVPQGTPV), 588 to 610 (PDGSKGVPTVVGDRPDTNVPGDH), 634 to 658 (PKPVPDKDKYDPTGGETTVPQGTPV), 670 to 692 (PDGSKGVPTVVGDRPDTNVPGDH), 716 to 740 (PKPVPDKDKYDPTGGETTVPQGTPV), 752 to 774 (PDGSKGVPTVVGDRPDTNVPGDH), 798 to 822 (PKPVPDKDKYDPTGGETTVPQGTPV), 834 to 856 (PDGSKGVPTVVGDRPDTNVPGDH), 880 to 904 (PKPVPDKDKYDPTGGETTVPQGTPV), and 962 to 989 (PKPVPDKDKYDPTGKAQQVNGKGNKLPA). The span at 272–281 (DRPDTNVPGD) shows a compositional bias: basic and acidic residues. The span at 320 to 329 (GETTVPQGTP) shows a compositional bias: polar residues. The segment covering 354 to 363 (DRPDTNVPGD) has biased composition (basic and acidic residues). Polar residues predominate over residues 402-411 (GETTVPQGTP). Positions 436–445 (DRPDTNVPGD) are enriched in basic and acidic residues. The span at 484–493 (GETTVPQGTP) shows a compositional bias: polar residues. Basic and acidic residues predominate over residues 518 to 527 (DRPDTNVPGD). Polar residues predominate over residues 566 to 575 (GETTVPQGTP). Residues 600 to 610 (DRPDTNVPGDH) show a composition bias toward basic and acidic residues. Residues 648 to 657 (GETTVPQGTP) are compositionally biased toward polar residues. Basic and acidic residues predominate over residues 682 to 692 (DRPDTNVPGDH). The segment covering 730 to 739 (GETTVPQGTP) has biased composition (polar residues). A compositionally biased stretch (basic and acidic residues) spans 764–774 (DRPDTNVPGDH). A compositionally biased stretch (polar residues) spans 812–821 (GETTVPQGTP). Over residues 846–856 (DRPDTNVPGDH) the composition is skewed to basic and acidic residues. Residues 894–903 (GETTVPQGTP) are compositionally biased toward polar residues. The LPXTG sorting signal motif lies at 987-991 (LPATG). The residue at position 990 (Thr990) is a Pentaglycyl murein peptidoglycan amidated threonine. Positions 991 to 1020 (GENATPFFNVAALTIISSVGLLSVSKKKED) are cleaved as a propeptide — removed by sortase.

It localises to the secreted. The protein localises to the cell wall. Its function is as follows. May play a role in both virulence and immunity. The polypeptide is C protein alpha-antigen (bca) (Streptococcus agalactiae serotype Ia (strain ATCC 27591 / A909 / CDC SS700)).